The following is an 820-amino-acid chain: Mitogen-activated protein kinase kinase kinase kinase 2 (820 aa).

The region spanning 16–273 is the Protein kinase domain; that stretch reads FELLQRVGAG…AEKLLQHPFT (258 aa). ATP-binding positions include 22-30 and Lys-45; that span reads VGAGTYGDV. The active-site Proton acceptor is Asp-136. Residues 294–314 are PEST1; that stretch reads LGTPSPEDCELETYDMFPDTI. A Phosphoserine modification is found at Ser-328. The segment at 344–360 is PEST2; the sequence is ETDPLNEPWEEEWTLLG. The disordered stretch occupies residues 387 to 442; the sequence is SEFQELDSPDDTMGTIKRAPFLGPLPTDPPAEEPLSSPPGTLPPPPSGPNSSPLLP. A Phosphoserine modification is found at Ser-394. A PEST3 region spans residues 405-448; that stretch reads APFLGPLPTDPPAEEPLSSPPGTLPPPPSGPNSSPLLPTAWATM. Residues 422 to 434 are compositionally biased toward pro residues; the sequence is SSPPGTLPPPPSG. The CNH domain maps to 482 to 793; the sequence is PLRIHAAVTW…IFRVLGAHRD (312 aa).

This sequence belongs to the protein kinase superfamily. STE Ser/Thr protein kinase family. STE20 subfamily. Interacts with TRAF2, TRAF6, MAP3K1/MEKK1 and MAP3K11/MLK3. Interacts with RAB8A. The cofactor is Mg(2+). Polyubiquitinated through 'Lys-48'-polyubiquitin chains, allowing proteasomal turnover. Ubiquitination requires the kinase activity of MAP4K2/GCK. In terms of processing, autophosphorylated in response to tumor necrosis factor (TNF), endotoxins or pro-inflammatory stimuli. Autophosphorylation leads to activation. Highly expressed in germinal center but not mantle zone B-cells. Also expressed in lung, brain and placenta and at lower levels in other tissues examined.

Its subcellular location is the cytoplasm. It localises to the basolateral cell membrane. The protein localises to the golgi apparatus membrane. The catalysed reaction is L-seryl-[protein] + ATP = O-phospho-L-seryl-[protein] + ADP + H(+). The enzyme catalyses L-threonyl-[protein] + ATP = O-phospho-L-threonyl-[protein] + ADP + H(+). With respect to regulation, the tumor necrosis factor (TNF), as well as endotoxins and pro-inflammatory stimuli such as polyinosine-polycytidine (poly(IC)), lipopolysaccharides (LPS), peptidoglycan (PGN), flagellin, or lipid A activate MAP4K2 by promoting its autophosphorylation. Functionally, serine/threonine-protein kinase which acts as an essential component of the MAP kinase signal transduction pathway. Acts as a MAPK kinase kinase kinase (MAP4K) and is an upstream activator of the stress-activated protein kinase/c-Jun N-terminal kinase (SAP/JNK) signaling pathway and to a lesser extent of the p38 MAPKs signaling pathway. Required for the efficient activation of JNKs by TRAF6-dependent stimuli, including pathogen-associated molecular patterns (PAMPs) such as polyinosine-polycytidine (poly(IC)), lipopolysaccharides (LPS), lipid A, peptidoglycan (PGN), or bacterial flagellin. To a lesser degree, IL-1 and engagement of CD40 also stimulate MAP4K2-mediated JNKs activation. The requirement for MAP4K2/GCK is most pronounced for LPS signaling, and extends to LPS stimulation of c-Jun phosphorylation and induction of IL-8. Enhances MAP3K1 oligomerization, which may relieve N-terminal mediated MAP3K1 autoinhibition and lead to activation following autophosphorylation. Also mediates the SAP/JNK signaling pathway and the p38 MAPKs signaling pathway through activation of the MAP3Ks MAP3K10/MLK2 and MAP3K11/MLK3. May play a role in the regulation of vesicle targeting or fusion. regulation of vesicle targeting or fusion. Activator of the Hippo signaling pathway which plays a pivotal role in organ size control and tumor suppression by restricting proliferation and promoting apoptosis. MAP4Ks act in parallel to and are partially redundant with STK3/MST2 and STK4/MST2 in the phosphorylation and activation of LATS1/2, and establish MAP4Ks as components of the expanded Hippo pathway. The chain is Mitogen-activated protein kinase kinase kinase kinase 2 from Homo sapiens (Human).